A 1038-amino-acid chain; its full sequence is Inner tegument protein (1038 aa).

The segment at 545-1038 (WGITPPVDVG…VPGNTSGSDP (494 aa)) is interaction with large tegument protein.

The protein belongs to the herpesviridae inner tegument protein family. In terms of assembly, interacts (via C-terminus) with the large tegument protein/LTP (via N-terminus).

It is found in the virion tegument. The protein resides in the host cytoplasm. It localises to the host nucleus. The protein localises to the host Golgi apparatus. Its subcellular location is the host trans-Golgi network. Plays an essential role in cytoplasmic secondary envelopment during viral egress. Interacts with the capsid via the large tegument protein/LTP and participates in its transport to the host trans-Golgi network (TGN) where secondary envelopment occurs. Modulates tegumentation and capsid accumulation at the viral assembly complex. The sequence is that of Inner tegument protein (21) from Homo sapiens (Human).